The primary structure comprises 99 residues: DNA-directed RNA polymerase subunit omega (99 aa).

Belongs to the RNA polymerase subunit omega family. In terms of assembly, the RNAP catalytic core consists of 2 alpha, 1 beta, 1 beta' and 1 omega subunit. When a sigma factor is associated with the core the holoenzyme is formed, which can initiate transcription.

It carries out the reaction RNA(n) + a ribonucleoside 5'-triphosphate = RNA(n+1) + diphosphate. Functionally, promotes RNA polymerase assembly. Latches the N- and C-terminal regions of the beta' subunit thereby facilitating its interaction with the beta and alpha subunits. The sequence is that of DNA-directed RNA polymerase subunit omega (rpoZ) from Xylella fastidiosa (strain 9a5c).